The sequence spans 129 residues: Small ribosomal subunit protein uS11 (129 aa).

Belongs to the universal ribosomal protein uS11 family. In terms of assembly, part of the 30S ribosomal subunit. Interacts with proteins S7 and S18. Binds to IF-3.

Functionally, located on the platform of the 30S subunit, it bridges several disparate RNA helices of the 16S rRNA. Forms part of the Shine-Dalgarno cleft in the 70S ribosome. This Ectopseudomonas mendocina (strain ymp) (Pseudomonas mendocina) protein is Small ribosomal subunit protein uS11.